The sequence spans 477 residues: Stromelysin-1 (477 aa).

An N-terminal signal peptide occupies residues 1 to 17; the sequence is MKGLPVLLWLCVVVCSS. A propeptide spans 18–99 (activation peptide); the sequence is YPLHDSARDD…PRCGVPDVGG (82 aa). The Cysteine switch motif lies at 90 to 97; sequence PRCGVPDV. Position 92 (cysteine 92) interacts with Zn(2+). The Ca(2+) site is built by aspartate 124 and aspartate 158. Residues histidine 168 and aspartate 170 each contribute to the Zn(2+) site. Ca(2+)-binding residues include aspartate 175, glycine 176, glycine 178, and valine 180. Histidine 183 is a Zn(2+) binding site. Ca(2+) is bound by residues glycine 190, asparagine 192, and aspartate 194. Zn(2+) is bound at residue histidine 196. Ca(2+) contacts are provided by aspartate 198, aspartate 199, and glutamate 201. A Zn(2+)-binding site is contributed by histidine 218. The active site involves glutamate 219. The Zn(2+) site is built by histidine 222 and histidine 228. Hemopexin repeat units lie at residues 287 to 336, 337 to 383, 385 to 433, and 434 to 477; these read SPMC…WPSL, PSNM…GLPA, VKKI…FPGV, and DSRV…WFNC. Cysteine 290 and cysteine 477 are oxidised to a cystine. Aspartate 297 is a binding site for Ca(2+). Residues aspartate 389 and aspartate 438 each contribute to the Ca(2+) site.

It belongs to the peptidase M10A family. Requires Ca(2+) as cofactor. Zn(2+) is required as a cofactor.

Its subcellular location is the secreted. It localises to the extracellular space. The protein localises to the extracellular matrix. It catalyses the reaction Preferential cleavage where P1', P2' and P3' are hydrophobic residues.. Its function is as follows. Metalloproteinase with a rather broad substrate specificity that can degrade fibronectin, laminin, gelatins of type I, III, IV, and V; collagens III, IV, X, and IX, and cartilage proteoglycans. Activates different molecules including growth factors, plasminogen or other matrix metalloproteinases such as MMP9. Once released into the extracellular matrix (ECM), the inactive pro-enzyme is activated by the plasmin cascade signaling pathway. Also acts intracellularly. For example, in dopaminergic neurons, gets activated by the serine protease HTRA2 upon stress and plays a pivotal role in DA neuronal degeneration by mediating microglial activation and alpha-synuclein/SNCA cleavage. In addition, plays a role in immune response and possesses antiviral activity against various viruses. Mechanistically, translocates from the cytoplasm into the cell nucleus upon virus infection to influence NF-kappa-B activities. In Mus musculus (Mouse), this protein is Stromelysin-1 (Mmp3).